Consider the following 603-residue polypeptide: DNA mismatch repair protein MutL (603 aa).

Basic and acidic residues predominate over residues isoleucine 337–serine 347. The tract at residues isoleucine 337–proline 383 is disordered.

Belongs to the DNA mismatch repair MutL/HexB family.

This protein is involved in the repair of mismatches in DNA. It is required for dam-dependent methyl-directed DNA mismatch repair. May act as a 'molecular matchmaker', a protein that promotes the formation of a stable complex between two or more DNA-binding proteins in an ATP-dependent manner without itself being part of a final effector complex. This chain is DNA mismatch repair protein MutL, found in Listeria monocytogenes serotype 4b (strain F2365).